Reading from the N-terminus, the 480-residue chain is uncharacterized protein (480 aa).

Lys222 carries the N6-(pyridoxal phosphate)lysine modification.

This sequence belongs to the Orn/Lys/Arg decarboxylase class-I family. Pyridoxal 5'-phosphate serves as cofactor.

This is an uncharacterized protein from Bacillus subtilis (strain 168).